The primary structure comprises 315 residues: Beta-carotene hydroxylase 1, chloroplastic (315 aa).

The transit peptide at 1 to 58 directs the protein to the chloroplast; sequence MAAEISISASSRAICLQRNPFPAPKYFATAPPLLFFSPLTCNLDAILRSRRKPRLAAC. 2 helical membrane-spanning segments follow: residues 112–132 and 146–166; these read YLVA…ISVY and FSEM…MEYW. The 128-residue stretch at 159 to 286 folds into the Fatty acid hydroxylase domain; the sequence is AAIGMEYWAR…KFDGVPYGLF (128 aa). A Histidine box-1 motif is present at residues 171–176; that stretch reads HRALWH. The Histidine box-2 signature appears at 183–187; it reads HESHH. 2 consecutive transmembrane segments (helical) span residues 196 to 216 and 222 to 242; these read LNDI…SFGF and IPGL…AYMF. The short motif at 244–249 is the Histidine box-3 element; it reads HDGLVH. The Histidine box-4 motif lies at 270-274; it reads HQLHH.

The protein belongs to the sterol desaturase family.

Its subcellular location is the plastid. The protein resides in the chloroplast membrane. It catalyses the reaction all-trans-beta-carotene + 4 reduced [2Fe-2S]-[ferredoxin] + 2 O2 + 4 H(+) = all-trans-zeaxanthin + 4 oxidized [2Fe-2S]-[ferredoxin] + 2 H2O. It carries out the reaction all-trans-beta-carotene + 2 reduced [2Fe-2S]-[ferredoxin] + O2 + 2 H(+) = beta-cryptoxanthin + 2 oxidized [2Fe-2S]-[ferredoxin] + H2O. The catalysed reaction is beta-cryptoxanthin + 2 reduced [2Fe-2S]-[ferredoxin] + O2 + 2 H(+) = all-trans-zeaxanthin + 2 oxidized [2Fe-2S]-[ferredoxin] + H2O. With respect to regulation, inhibited by o-phenanthroline and 8-hydroxyquinoline. Its function is as follows. Nonheme diiron monooxygenase involved in the biosynthesis of xanthophylls. Specific for beta-ring hydroxylations of beta-carotene. Produces beta-cryptoxanthin and zeaxanthin. Uses ferredoxin as an electron donor. This chain is Beta-carotene hydroxylase 1, chloroplastic, found in Capsicum annuum (Capsicum pepper).